The primary structure comprises 494 residues: DBIRD complex subunit ZNF326 (494 aa).

Disordered stretches follow at residues 1–22, 147–170, and 202–264; these read MDRE…QSFS, AFGG…RGQM, and KMAP…NSEK. Polar residues predominate over residues 7–22; that stretch reads SYNQRSVNSYGNQSFS. A Bipartite nuclear localization signal motif is present at residues 200–221; that stretch reads KRKMAPPFKPVGFFGKKQKLSK. 2 consecutive C2H2 AKAP95-type zinc fingers follow at residues 273-295 and 365-388; these read CSFC…SATH and CSAC…SADH. Positions 429-494 are disordered; that stretch reads PFETQPDEQQ…CDPLTTTDEV (66 aa). The segment covering 433 to 451 has biased composition (acidic residues); the sequence is QPDEQQQEQEEEEEEEEQQ.

This sequence belongs to the AKAP95 family. As to quaternary structure, component of the DBIRD complex.

The protein localises to the nucleus. Functionally, core component of the DBIRD complex, a multiprotein complex that acts at the interface between core mRNP particles and RNA polymerase II (RNAPII) and integrates transcript elongation with the regulation of alternative splicing. This Xenopus laevis (African clawed frog) protein is DBIRD complex subunit ZNF326 (znf326).